The chain runs to 905 residues: Protein translocase subunit SecA (905 aa).

Residues Q87, 105 to 109 (GEGKT), and D512 each bind ATP. Positions 565-584 (RRIDNQLRGRSGRQGDPGSS) are disordered. Positions 886, 888, 897, and 898 each coordinate Zn(2+).

Belongs to the SecA family. In terms of assembly, monomer and homodimer. Part of the essential Sec protein translocation apparatus which comprises SecA, SecYEG and auxiliary proteins SecDF-YajC and YidC. It depends on Zn(2+) as a cofactor.

It is found in the cell inner membrane. Its subcellular location is the cytoplasm. It carries out the reaction ATP + H2O + cellular proteinSide 1 = ADP + phosphate + cellular proteinSide 2.. Its function is as follows. Part of the Sec protein translocase complex. Interacts with the SecYEG preprotein conducting channel. Has a central role in coupling the hydrolysis of ATP to the transfer of proteins into and across the cell membrane, serving both as a receptor for the preprotein-SecB complex and as an ATP-driven molecular motor driving the stepwise translocation of polypeptide chains across the membrane. This chain is Protein translocase subunit SecA, found in Haemophilus ducreyi (strain 35000HP / ATCC 700724).